Here is a 924-residue protein sequence, read N- to C-terminus: Inositol polyphosphate 4-phosphatase type II (924 aa).

Basic and acidic residues predominate over residues 1 to 13 (MEIKEEGASEEGQ). Disordered regions lie at residues 1–24 (MEIKEEGASEEGQHFLPTAQANDP), 481–516 (ILKKPPSPKSSTEESSPQDQPPVMRGQDSIPHHSDY), and 546–570 (DGGSEGSGGNNDGEKEPSLTDAIPS). Positions 23-165 (DPGDCQFTSI…LKSKEQLLVL (143 aa)) constitute a C2 domain.

It belongs to the inositol 3,4-bisphosphate 4-phosphatase family. As to expression, widely expressed with highest levels occurring in the skeletal muscle and heart.

It carries out the reaction a 1,2-diacyl-sn-glycero-3-phospho-(1D-myo-inositol-3,4-bisphosphate) + H2O = a 1,2-diacyl-sn-glycero-3-phospho-(1D-myo-inositol-3-phosphate) + phosphate. The enzyme catalyses 1D-myo-inositol 1,3,4-trisphosphate + H2O = 1D-myo-inositol 1,3-bisphosphate + phosphate. The catalysed reaction is 1D-myo-inositol 3,4-bisphosphate + H2O = 1D-myo-inositol 3-phosphate + phosphate. The protein operates within signal transduction; phosphatidylinositol signaling pathway. With respect to regulation, strongly inhibited by inositol hexakisphosphate. Its function is as follows. Catalyzes the hydrolysis of the 4-position phosphate of phosphatidylinositol 3,4-bisphosphate, inositol 1,3,4-trisphosphate and inositol 3,4-trisphosphate. Plays a role in the late stages of macropinocytosis by dephosphorylating phosphatidylinositol 3,4-bisphosphate in membrane ruffles. The lipid phosphatase activity is critical for tumor suppressor function. Antagonizes the PI3K-AKT/PKB signaling pathway by dephosphorylating phosphoinositides and thereby modulating cell cycle progression and cell survival. The polypeptide is Inositol polyphosphate 4-phosphatase type II (INPP4B) (Homo sapiens (Human)).